A 239-amino-acid chain; its full sequence is Uridylate kinase (239 aa).

Position 10–13 (K10–G13) interacts with ATP. The tract at residues G18–G23 is involved in allosteric activation by GTP. G52 contributes to the UMP binding site. 2 residues coordinate ATP: G53 and R57. UMP is bound by residues D72 and T133–T140. ATP contacts are provided by N161, Y167, and D170.

The protein belongs to the UMP kinase family. Homohexamer.

Its subcellular location is the cytoplasm. It catalyses the reaction UMP + ATP = UDP + ADP. It participates in pyrimidine metabolism; CTP biosynthesis via de novo pathway; UDP from UMP (UMPK route): step 1/1. With respect to regulation, allosterically activated by GTP. Inhibited by UTP. Catalyzes the reversible phosphorylation of UMP to UDP. The polypeptide is Uridylate kinase (Lacticaseibacillus paracasei (strain ATCC 334 / BCRC 17002 / CCUG 31169 / CIP 107868 / KCTC 3260 / NRRL B-441) (Lactobacillus paracasei)).